The sequence spans 614 residues: MRMWLVSAIALVDILCTSKIEELVENMGKKIEEALPHEFDSAEKEALKKHLKETAGLGTRLMVPCIFHEDRVVASPTTRYQDIDEEEKGYVEKVIALLPRLLWRSVAYIYVFGNDSWVVNLMEEVFETAPFKKSDAVALYKRARGRLGIRLIDLVNRTFRHNIGMLNRFGQRLAQEAEAKIQEISSSLSDEEKRKEEKMLQIIKEYGESLCTKEKQEEIIRAQEIMCDACACIWERDSNRESFVMETYSRHLYLRMIGSSMDVEEPLLSYIDHRGLIDAYEKYKSIDIVAELIKQVFTERGCISDESVNDAVCGVREREEAEKMRGEEERRKKEEESLRNTLELLRMEEKEKSKSRGKKKKGGKKGSGEVTAKMEEEKKDSEEVEESAEAEVSLEEMAVGGARSKERSSKKKSRSKGHRYKVHKRVLRWTKSAERIKAELDEGSEEKWRNKSIEEIEEQKKVHDIIEVCVLLRSLDANRFFVSTNRYMKDGTERWKMVGVGIFEEGGEKKVGKVEVGLYRDKGEGSVIYHLMFKAMDTEKAGKGARSSFGKGDDVEGLEEGAGELSDMSGFEYPKGVRSEIVKGGDAFKIVYRNPKDTSEVLRSLTVLQKAEVL.

Composition is skewed to basic and acidic residues over residues 317–338 (EREE…EESL) and 345–354 (LRMEEKEKSK). Residues 317–420 (EREEAEKMRG…KKSRSKGHRY (104 aa)) are disordered. Basic residues predominate over residues 355–364 (SRGKKKKGGK). Over residues 372–381 (AKMEEEKKDS) the composition is skewed to basic and acidic residues. Positions 382–394 (EEVEESAEAEVSL) are enriched in acidic residues. A compositionally biased stretch (basic residues) spans 408–420 (SSKKKSRSKGHRY).

Belongs to the UPF0329 family.

The chain is UPF0329 protein ECU03_0090 from Encephalitozoon cuniculi (strain GB-M1) (Microsporidian parasite).